The following is a 323-amino-acid chain: Aquaporin-4 (323 aa).

At 1-36 (MSDRPAARRWGKCGPLCTRESIMVAFKGVWTQTFWK) the chain is on the cytoplasmic side. 2 S-palmitoyl cysteine lipidation sites follow: cysteine 13 and cysteine 17. The helical transmembrane segment at 37–57 (AVTAEFLAMLIFVLLSLGSTI) threads the bilayer. Residues 58 to 69 (NWGGAEKPLPVD) are Extracellular-facing. The helical transmembrane segment at 70–89 (MVLISLCFGLSIATMVQCFG) threads the bilayer. Topologically, residues 90 to 93 (HISG) are cytoplasmic. An intramembrane region (discontinuously helical) is located at residues 94–101 (GHINPAVT). The NPA 1 motif lies at 97-99 (NPA). At 102 to 115 (VAMVCTRRISIAKS) the chain is on the cytoplasmic side. The residue at position 111 (serine 111) is a Phosphoserine; by PKG. A helical membrane pass occupies residues 116-136 (VFYIAAQCLGAIIGAGILYLV). Over 137–155 (TPPSVVGGLGVTTVHGNLS) the chain is Extracellular. N-linked (GlcNAc...) asparagine glycosylation occurs at asparagine 153. Residues 156-176 (AGHGLLVELIITFQLVFTIFA) form a helical membrane-spanning segment. Residues 177 to 184 (SCDSKRTD) are Cytoplasmic-facing. A Phosphoserine; by PKC modification is found at serine 180. The chain crosses the membrane as a helical span at residues 185–205 (VTGSIALAIGISVAIGHLFAI). Asparagine 206 carries N-linked (GlcNAc...) asparagine glycosylation. The Extracellular portion of the chain corresponds to 206–208 (NYT). Residues 209 to 222 (GASMNPARSFGPAV) constitute an intramembrane region (discontinuously helical). Residues 213–215 (NPA) carry the NPA 2 motif. The Extracellular portion of the chain corresponds to 223–231 (IMGNWENHW). The chain crosses the membrane as a helical span at residues 232 to 252 (IYWVGPIIGAVLAGGLYEYVF). Over 253 to 323 (CPDVELKRRF…DPSGEVLSSV (71 aa)) the chain is Cytoplasmic. A phosphoserine mark is found at serine 276 and serine 285. Residue threonine 289 is modified to Phosphothreonine. Serine 321 bears the Phosphoserine mark.

Belongs to the MIP/aquaporin (TC 1.A.8) family. As to quaternary structure, homotetramer. The tetramers can form oligomeric arrays in membranes. The size of the oligomers differs between tissues and is smaller in skeletal muscle than in brain. Interaction between AQP4 oligomeric arrays in close-by cells can contribute to cell-cell adhesion. Part of a complex containing MLC1, TRPV4, HEPACAM and ATP1B1. Phosphorylation by PKC at Ser-180 reduces conductance by 50%. Phosphorylation by PKG at Ser-111 in response to glutamate increases conductance by 40%. Post-translationally, isoform 2: Palmitoylated on its N-terminal region. Isoform 1: Not palmitoylated. As to expression, detected in brain and lung.

The protein resides in the cell membrane. It is found in the basolateral cell membrane. It localises to the endosome membrane. The protein localises to the sarcolemma. Its subcellular location is the cell projection. The catalysed reaction is H2O(in) = H2O(out). In terms of biological role, forms a water-specific channel. Plays an important role in brain water homeostasis and in glymphatic solute transport. Required for a normal rate of water exchange across the blood brain interface. Required for normal levels of cerebrospinal fluid influx into the brain cortex and parenchyma along paravascular spaces that surround penetrating arteries, and for normal drainage of interstitial fluid along paravenous drainage pathways. Thereby, it is required for normal clearance of solutes from the brain interstitial fluid, including soluble beta-amyloid peptides derived from APP. Plays a redundant role in urinary water homeostasis and urinary concentrating ability. This is Aquaporin-4 (AQP4) from Bos taurus (Bovine).